A 490-amino-acid polypeptide reads, in one-letter code: Glutamate--tRNA ligase 1 (490 aa).

The 'HIGH' region signature appears at 27 to 37; it reads PSPTGYLHIGG. The 'KMSKS' region signature appears at 254 to 258; it reads KLSKR. Residue K257 participates in ATP binding.

It belongs to the class-I aminoacyl-tRNA synthetase family. Glutamate--tRNA ligase type 1 subfamily. Monomer.

The protein resides in the cytoplasm. The catalysed reaction is tRNA(Glu) + L-glutamate + ATP = L-glutamyl-tRNA(Glu) + AMP + diphosphate. In terms of biological role, catalyzes the attachment of glutamate to tRNA(Glu) in a two-step reaction: glutamate is first activated by ATP to form Glu-AMP and then transferred to the acceptor end of tRNA(Glu). The sequence is that of Glutamate--tRNA ligase 1 from Sphingopyxis alaskensis (strain DSM 13593 / LMG 18877 / RB2256) (Sphingomonas alaskensis).